Consider the following 476-residue polypeptide: Protein transport protein Sec61 subunit alpha (476 aa).

At 2 to 33 (GIKFLEFIKPFCAVLPEIQKPERKIQFREKVL) the chain is on the cytoplasmic side. A helical membrane pass occupies residues 34 to 53 (WTAITLFIFLVCCQIPLFGI). Over 54 to 76 (MSSDSADPFYWMRVILASNRGTL) the chain is Lumenal. The helical transmembrane segment at 77–96 (MELGISPIVTSGLIMQLLAG) threads the bilayer. Over 97-117 (AKIIEVGDTPKDRALFNGAQK) the chain is Cytoplasmic. The helical transmembrane segment at 118 to 138 (LFGMIITIGQAIVYVMTGMYG) threads the bilayer. Over 139–144 (DPSEMG) the chain is Lumenal. The helical transmembrane segment at 145-165 (AGICLLIIIQLFVAGLIVLLL) threads the bilayer. Residues 166 to 172 (DELLQKG) lie on the Cytoplasmic side of the membrane. The helical transmembrane segment at 173–193 (YGLGSGISLFIATNICETIVW) threads the bilayer. At 194 to 240 (KAFSPTTVNTGRGTEFEGAIIALFHLLATRTDKVRALREAFYRQNLP) the chain is on the lumenal side. Residues 241-261 (NILNLIATVFVFAVVIYFQGF) traverse the membrane as a helical segment. The Cytoplasmic segment spans residues 262 to 288 (RVDLPIKSARYRGQYNTYPIKLFYTSN). The helical transmembrane segment at 289–309 (IPIILQSALVSNLYVISQMLS) threads the bilayer. The Lumenal portion of the chain corresponds to 310–354 (TRFSGNFLVNLLGTWSDATSGGPARAYPVAGLCYYLSPPESFGSV). A helical transmembrane segment spans residues 355–375 (LDDPVHAAIYIVFMLGSCAFF). The Cytoplasmic segment spans residues 376–420 (SKTWIEVSGSSAKDVAKQLKEQQMVMRGHRETSMVHELNRYIPTA). Residues 421–441 (AAFGGLCIGGLSVMADFLGAI) traverse the membrane as a helical segment. Topologically, residues 442 to 445 (GSGT) are lumenal. A helical transmembrane segment spans residues 446-462 (GILLAVTIIYQYFEIFV). Residues 463-476 (KEQSEMGSMGALLF) lie on the Cytoplasmic side of the membrane.

Belongs to the SecY/SEC61-alpha family. As to quaternary structure, the SEC61 channel-forming translocon complex consists of channel-forming core components SEC61A1, SEC61B and SEC61G and different auxiliary components such as SEC62 and SEC63. The SEC61 channel associates with the multi-pass translocon (MPT) complex.

Its subcellular location is the endoplasmic reticulum membrane. Functionally, component of SEC61 channel-forming translocon complex that mediates transport of signal peptide-containing precursor polypeptides across the endoplasmic reticulum (ER). Forms a ribosome receptor and a gated pore in the ER membrane, both functions required for cotranslational translocation of nascent polypeptides. May cooperate with auxiliary protein SEC62, SEC63 and HSPA5/BiP to enable post-translational transport of small presecretory proteins. The SEC61 channel is also involved in ER membrane insertion of transmembrane proteins: it mediates membrane insertion of the first few transmembrane segments of proteins, while insertion of subsequent transmembrane regions of multi-pass membrane proteins is mediated by the multi-pass translocon (MPT) complex. This Notothenia angustata (Rockcod) protein is Protein transport protein Sec61 subunit alpha (sec61a).